A 215-amino-acid chain; its full sequence is Oligoribonuclease (215 aa).

The region spanning L5–L170 is the Exonuclease domain. Y127 is an active-site residue. The tract at residues L196–G215 is disordered. Positions A202–G215 are enriched in low complexity.

The protein belongs to the oligoribonuclease family.

It is found in the cytoplasm. Its function is as follows. 3'-to-5' exoribonuclease specific for small oligoribonucleotides. The polypeptide is Oligoribonuclease (Mycobacterium avium (strain 104)).